Reading from the N-terminus, the 202-residue chain is Endothelin-1 (202 aa).

Positions 1–25 (MDYFPVIFSLLFVTFQGAPETAVLG) are cleaved as a signal peptide. Residues 26-50 (AELSTGAENGVQSPPPSTPWRPRRS) constitute a propeptide that is removed on maturation. 2 cysteine pairs are disulfide-bonded: C53–C67 and C55–C63. Positions 74–202 (VNTPERVVPY…DQKLTHNRAH (129 aa)) are excised as a propeptide. Residues 110-124 (CQCAHQKDKKCWNFC) form an endothelin-like region.

The protein belongs to the endothelin/sarafotoxin family. In terms of tissue distribution, highest expression in the adult is in lung. Lower levels found in heart, kidney, brain and intestine. In the embryo, expressed in outer and inner pharyngeal arch surfaces. Also expressed in endothelium of dorsal aorta and arch arteries, and in epithelium of pharyngeal pouches.

It localises to the secreted. Its function is as follows. Endothelins are endothelium-derived vasoconstrictor peptides. Probable ligand for G-protein coupled receptors EDNRA and EDNRB which activates PTK2B, BCAR1, BCAR3 and, GTPases RAP1 and RHOA cascade in glomerular mesangial cells. Also binds the DEAR/FBXW7-AS1 receptor. Promotes mesenteric arterial wall remodeling via activation of ROCK signaling and subsequent colocalization of NFATC3 with F-actin filaments. NFATC3 then translocates to the nucleus where it subsequently promotes the transcription of the smooth muscle hypertrophy and differentiation marker ACTA2. The chain is Endothelin-1 (Edn1) from Mus musculus (Mouse).